Here is a 174-residue protein sequence, read N- to C-terminus: ATP synthase subunit b (174 aa).

A helical membrane pass occupies residues 18 to 38 (IIVVSGSFLILMFLLKHFAWG).

It belongs to the ATPase B chain family. As to quaternary structure, F-type ATPases have 2 components, F(1) - the catalytic core - and F(0) - the membrane proton channel. F(1) has five subunits: alpha(3), beta(3), gamma(1), delta(1), epsilon(1). F(0) has three main subunits: a(1), b(2) and c(10-14). The alpha and beta chains form an alternating ring which encloses part of the gamma chain. F(1) is attached to F(0) by a central stalk formed by the gamma and epsilon chains, while a peripheral stalk is formed by the delta and b chains.

Its subcellular location is the cell membrane. Functionally, f(1)F(0) ATP synthase produces ATP from ADP in the presence of a proton or sodium gradient. F-type ATPases consist of two structural domains, F(1) containing the extramembraneous catalytic core and F(0) containing the membrane proton channel, linked together by a central stalk and a peripheral stalk. During catalysis, ATP synthesis in the catalytic domain of F(1) is coupled via a rotary mechanism of the central stalk subunits to proton translocation. In terms of biological role, component of the F(0) channel, it forms part of the peripheral stalk, linking F(1) to F(0). This Enterococcus hirae (strain ATCC 9790 / DSM 20160 / JCM 8729 / LMG 6399 / NBRC 3181 / NCIMB 6459 / NCDO 1258 / NCTC 12367 / WDCM 00089 / R) protein is ATP synthase subunit b.